We begin with the raw amino-acid sequence, 153 residues long: Cytochrome c-type biogenesis protein CcmE (153 aa).

Topologically, residues 1–8 (MTTRRGRR) are cytoplasmic. Residues 9 to 29 (ALLIAGGVGLLALAAALVLNA) traverse the membrane as a helical; Signal-anchor for type II membrane protein segment. Topologically, residues 30 to 153 (LRSNLVFFFS…PSATLQTEAR (124 aa)) are periplasmic. Heme-binding residues include histidine 124 and tyrosine 128.

It belongs to the CcmE/CycJ family.

It localises to the cell inner membrane. Heme chaperone required for the biogenesis of c-type cytochromes. Transiently binds heme delivered by CcmC and transfers the heme to apo-cytochromes in a process facilitated by CcmF and CcmH. The polypeptide is Cytochrome c-type biogenesis protein CcmE (Bordetella parapertussis (strain 12822 / ATCC BAA-587 / NCTC 13253)).